A 20-amino-acid chain; its full sequence is Short cationic peptide-4b (20 aa).

E20 carries the post-translational modification Glutamic acid 1-amide.

As to expression, expressed by the venom gland.

The protein resides in the secreted. In Cupiennius salei (American wandering spider), this protein is Short cationic peptide-4b.